The following is a 388-amino-acid chain: Dual-specificity RNA methyltransferase RlmN (388 aa).

Glu-109 acts as the Proton acceptor in catalysis. Residues 115–354 (EDDRATLCVS…TIVRKTRGDD (240 aa)) form the Radical SAM core domain. An intrachain disulfide couples Cys-122 to Cys-359. Residues Cys-129, Cys-133, and Cys-136 each contribute to the [4Fe-4S] cluster site. S-adenosyl-L-methionine is bound by residues 183 to 184 (GE), Ser-215, 237 to 239 (SLH), and Asn-316. Catalysis depends on Cys-359, which acts as the S-methylcysteine intermediate.

It belongs to the radical SAM superfamily. RlmN family. Requires [4Fe-4S] cluster as cofactor.

The protein resides in the cytoplasm. The enzyme catalyses adenosine(2503) in 23S rRNA + 2 reduced [2Fe-2S]-[ferredoxin] + 2 S-adenosyl-L-methionine = 2-methyladenosine(2503) in 23S rRNA + 5'-deoxyadenosine + L-methionine + 2 oxidized [2Fe-2S]-[ferredoxin] + S-adenosyl-L-homocysteine. The catalysed reaction is adenosine(37) in tRNA + 2 reduced [2Fe-2S]-[ferredoxin] + 2 S-adenosyl-L-methionine = 2-methyladenosine(37) in tRNA + 5'-deoxyadenosine + L-methionine + 2 oxidized [2Fe-2S]-[ferredoxin] + S-adenosyl-L-homocysteine. Functionally, specifically methylates position 2 of adenine 2503 in 23S rRNA and position 2 of adenine 37 in tRNAs. m2A2503 modification seems to play a crucial role in the proofreading step occurring at the peptidyl transferase center and thus would serve to optimize ribosomal fidelity. The sequence is that of Dual-specificity RNA methyltransferase RlmN from Salmonella arizonae (strain ATCC BAA-731 / CDC346-86 / RSK2980).